Here is a 441-residue protein sequence, read N- to C-terminus: Aminopeptidase C (441 aa).

Active-site residues include C70, H361, and N382.

Belongs to the peptidase C1 family.

It catalyses the reaction Inactivates bleomycin B2 (a cytotoxic glycometallopeptide) by hydrolysis of a carboxyamide bond of beta-aminoalanine, but also shows general aminopeptidase activity. The specificity varies somewhat with source, but amino acid arylamides of Met, Leu and Ala are preferred.. The sequence is that of Aminopeptidase C (pepC) from Listeria monocytogenes serovar 1/2a (strain ATCC BAA-679 / EGD-e).